The sequence spans 717 residues: Polyribonucleotide nucleotidyltransferase (717 aa).

Residues Asp-496 and Asp-502 each coordinate Mg(2+). Positions 563–622 (PRLLTIKIDPDLIGLVIGPGGKTVKGITEQTGTKIDIDDDGTVTISSTDGEQAEKAKRLI) constitute a KH domain. An S1 motif domain is found at 632 to 700 (GEVYLGRVTR…SKGRLNLTRL (69 aa)).

The protein belongs to the polyribonucleotide nucleotidyltransferase family. The cofactor is Mg(2+).

The protein resides in the cytoplasm. The enzyme catalyses RNA(n+1) + phosphate = RNA(n) + a ribonucleoside 5'-diphosphate. In terms of biological role, involved in mRNA degradation. Catalyzes the phosphorolysis of single-stranded polyribonucleotides processively in the 3'- to 5'-direction. This chain is Polyribonucleotide nucleotidyltransferase, found in Microcystis aeruginosa (strain NIES-843 / IAM M-2473).